Consider the following 719-residue polypeptide: Putative ankyrin repeat protein RBE_0319 (719 aa).

9 ANK repeats span residues 377–406, 408–438, 442–472, 476–506, 510–540, 544–572, 576–605, 609–639, and 642–672; these read VAEELLFTATYYQNINIIKQIIETKIEISS, TLIKALYINFTSDNKEILDYLLSFKGLNINE, NGGTLLDYAITFNKLDIVKKLLSHENIEVNK, YGFTILEQAINDDKLEIVKLLLSCKSLEINQ, YQTTPLQQAINGDKLEIVKLLLSHPDIKFNE, LGYTSLDWVIICNKLEIFKVLMPHLDINQ, DGYTPLEWSIYNSYEVFQTLLLRPDINVNE, HGLTPLQLAIIDHNDQMIQALLSHKNIEVSE, and QYGTPLELVINNSNDTALKLLLSHPKINLNK.

The protein is Putative ankyrin repeat protein RBE_0319 of Rickettsia bellii (strain RML369-C).